Consider the following 247-residue polypeptide: ATP synthase subunit a, chloroplastic (247 aa).

The next 5 membrane-spanning stretches (helical) occupy residues 38-58, 95-115, 134-154, 199-219, and 220-240; these read QVLI…IIAV, VPFI…GALL, INTT…AGLT, LVVV…VMFL, and GLFT…AYIG.

The protein belongs to the ATPase A chain family. F-type ATPases have 2 components, CF(1) - the catalytic core - and CF(0) - the membrane proton channel. CF(1) has five subunits: alpha(3), beta(3), gamma(1), delta(1), epsilon(1). CF(0) has four main subunits: a, b, b' and c.

Its subcellular location is the plastid. The protein resides in the chloroplast thylakoid membrane. Key component of the proton channel; it plays a direct role in the translocation of protons across the membrane. This chain is ATP synthase subunit a, chloroplastic, found in Morus indica (Mulberry).